The chain runs to 233 residues: MTIGIIGAMEEEVELLKNSMPSVEEIVIGGAKFYVGEVAGKEVVLLESGIGKVNAALGTTLMADRFKPEVIINTGSAGGMAEGLAVGDVIISDRLAYGDVDVTEFGYTYGQVPRMPAFYQGDAVLLKKAETIYREYFAASENKAVYGLVVTNDSFIMRPDQHETIRTFFPDVKAVEMEAAAIAQVAYQFDIPFLIIRAISDLANQEATISFDEFIHLAAKQSATCIIELLKTI.

E12 serves as the catalytic Proton acceptor. Substrate-binding positions include G78, I156, and 177–178 (ME). The active-site Proton donor is the D201.

The protein belongs to the PNP/UDP phosphorylase family. MtnN subfamily.

The enzyme catalyses S-adenosyl-L-homocysteine + H2O = S-(5-deoxy-D-ribos-5-yl)-L-homocysteine + adenine. The catalysed reaction is S-methyl-5'-thioadenosine + H2O = 5-(methylsulfanyl)-D-ribose + adenine. It catalyses the reaction 5'-deoxyadenosine + H2O = 5-deoxy-D-ribose + adenine. Its pathway is amino-acid biosynthesis; L-methionine biosynthesis via salvage pathway; S-methyl-5-thio-alpha-D-ribose 1-phosphate from S-methyl-5'-thioadenosine (hydrolase route): step 1/2. In terms of biological role, catalyzes the irreversible cleavage of the glycosidic bond in both 5'-methylthioadenosine (MTA) and S-adenosylhomocysteine (SAH/AdoHcy) to adenine and the corresponding thioribose, 5'-methylthioribose and S-ribosylhomocysteine, respectively. Also cleaves 5'-deoxyadenosine, a toxic by-product of radical S-adenosylmethionine (SAM) enzymes, into 5-deoxyribose and adenine. In Listeria monocytogenes serotype 4a (strain HCC23), this protein is 5'-methylthioadenosine/S-adenosylhomocysteine nucleosidase.